We begin with the raw amino-acid sequence, 2110 residues long: Tenascin (2110 aa).

The first 22 residues, 1–22 (MGAVTWLLPGIFLALFALTPEG), serve as a signal peptide directing secretion. N38 carries N-linked (GlcNAc...) asparagine glycosylation. Residues S65, S70, and S72 each carry the phosphoserine modification. Residues 69–91 (ESASGEKDLTPTPESSGSFQEHT) are disordered. A glycan (O-linked (Xyl...) (chondroitin sulfate) serine) is linked at S72. Residues 80 to 89 (TPESSGSFQE) are compositionally biased toward polar residues. Residues 118 to 142 (DVKELLSRLEELELLVSSLREQCTM) are a coiled coil. Residues N166 and N184 are each glycosylated (N-linked (GlcNAc...) asparagine). An EGF-like 1; incomplete domain is found at 174–185 (CVCEPGWKGPNC). 14 consecutive EGF-like domains span residues 186 to 216 (SEPDCPGNCNLRGQCLDGQCICDEGFTGEDC), 217 to 247 (SQLACPNDCNDQGRCVNGVCVCFEGYAGPDC), 248 to 279 (GLEVCPVPCSEEHGMCVDGRCVCKDGFAGEDC), 280 to 310 (NEPLCLNNCYNRGRCVENECVCDEGFTGEDC), 311 to 341 (SELICPNDCFDRGRCINGTCYCEEGFTGEDC), 342 to 372 (GELTCPNDCQGRGQCEEGQCVCNEGFAGADC), 373 to 403 (SEKRCPADCHHRGRCLNGQCECDDGFTGADC), 404 to 434 (GDLQCPNGCSGHGRCVNGQCVCDEGYTGEDC), 435 to 465 (SQRRCPNDCHNRGLCVQGKCICEQGFKGFDC), 466 to 496 (SEMSCPNDCHQHGRCVNGMCICDDDYTGEDC), 497 to 527 (RDRRCPRDCSQRGRCVDGQCICEDGFTGPDC), 528 to 558 (AELSCPSDCHGHGRCVNGQCICHEGFTGKDC), 559 to 589 (KEQRCPSDCHGQGRCEDGQCICHEGFTGLDC), and 590 to 621 (GQRSCPNDCSNQGQCVSGRCICNEGYTGIDCS). Cystine bridges form between C190–C200, C194–C205, C207–C216, C221–C231, C225–C236, C238–C247, C252–C263, C256–C268, C270–C279, C284–C294, C288–C299, C301–C310, C315–C325, C319–C330, C332–C341, C346–C356, C350–C361, C363–C372, C377–C387, C381–C392, C394–C403, C408–C418, C412–C423, C425–C434, C439–C449, C443–C454, C456–C465, C470–C480, C474–C485, C487–C496, C501–C511, C505–C516, C518–C527, C532–C542, C536–C547, C549–C558, C563–C573, C567–C578, C580–C589, C594–C604, C598–C609, and C611–C620. N327 carries N-linked (GlcNAc...) asparagine glycosylation. 14 Fibronectin type-III domains span residues 625 to 715 (PPKD…LPAP), 716 to 804 (EGLK…TRLD), 805 to 894 (APSH…TGLD), 895 to 988 (APRN…IDAP), 989 to 1077 (KDLR…VPSL), 1078 to 1165 (ENLT…TGTT), 1167 to 1259 (NLGE…LPQL), 1260 to 1348 (GGLS…AREP), 1349 to 1440 (EIGN…ALPL), 1442 to 1530 (ENLT…EAEP), 1531 to 1620 (EVDN…TAMG), 1621 to 1710 (SPKE…ALDG), 1711 to 1797 (PSGL…TDLD), and 1798 to 1886 (SPRE…IGLL). A glycan (N-linked (GlcNAc...) asparagine) is linked at N788. Position 905 is a phosphothreonine (T905). N-linked (GlcNAc...) asparagine glycans are attached at residues N1018, N1079, N1093, N1119, N1184, N1210, N1275, N1301, N1354, N1364, N1394, and N1443. N1718 is a glycosylation site (N-linked (GlcNAc...) asparagine). The Fibrinogen C-terminal domain maps to 1884–2099 (GLLYPFPRDC…FAEMKLRPSN (216 aa)). N-linked (GlcNAc...) asparagine glycans are attached at residues N1969 and N2071.

This sequence belongs to the tenascin family. In terms of assembly, homohexamer; disulfide-linked. A homotrimer may be formed in the triple coiled-coil region and may be stabilized by disulfide rings at both ends. Two of such half-hexabrachions may be disulfide linked within the central globule. Interacts with CSPG4. Interacts (via the 3rd fibronectin type-III domain) with integrin ITGA9:ITGB1. In terms of processing, N-glycosylated. In terms of tissue distribution, expressed in the corneal limbus, the periosteum and the rib molecular layer of the cerebellum, the matrix of kidney tubules, blood vessels, stomach and intestine (at protein level). Weakly expressed in the brain. As to expression, highly expressed in the thymus and moderately expressed in the brain.

It localises to the secreted. Its subcellular location is the extracellular space. The protein resides in the extracellular matrix. Extracellular matrix protein implicated in guidance of migrating neurons as well as axons during development, synaptic plasticity as well as neuronal regeneration. Promotes neurite outgrowth when provided to neurons in culture. May play a role in supporting the growth of epithelial tumors. Ligand for integrins ITGA8:ITGB1, ITGA9:ITGB1, ITGAV:ITGB3 and ITGAV:ITGB6. In tumors, stimulates angiogenesis by elongation, migration and sprouting of endothelial cells. The polypeptide is Tenascin (Mus musculus (Mouse)).